Consider the following 299-residue polypeptide: MRNELLDFLEFLKGEKNLSHYTVDNYYKDLTQAENFFNEQFELYQWDEVTHKHIRHFLAYLKDKNYEKSTTARKLSAIRSLFKFLTREEKIRSNTSALLATPKKERKLPEFLSIEEVEMLINAPGDDPFGLRDKAILEVFYCSGIRLGELWGLDLQNLDLQTGYLKVTGKGNIERLAPLGSFALAAIEDYLYNARPELLKKNKSVENCDALFLNKFGTRISQRSIRRRVKKYVQQTASEHRVSPHSLRHSFATHLLEGGADLRAVQELLGHVNISTTQIYTHVNQARMTEVYNKYHPRA.

The region spanning methionine 1 to threonine 86 is the Core-binding (CB) domain. Residues lysine 107–asparagine 293 form the Tyr recombinase domain. Residues arginine 146, lysine 170, histidine 245, arginine 248, and histidine 271 contribute to the active site. Tyrosine 280 (O-(3'-phospho-DNA)-tyrosine intermediate) is an active-site residue.

The protein belongs to the 'phage' integrase family. XerC subfamily. As to quaternary structure, forms a cyclic heterotetrameric complex composed of two molecules of XerC and two molecules of XerD.

The protein localises to the cytoplasm. Functionally, site-specific tyrosine recombinase, which acts by catalyzing the cutting and rejoining of the recombining DNA molecules. The XerC-XerD complex is essential to convert dimers of the bacterial chromosome into monomers to permit their segregation at cell division. It also contributes to the segregational stability of plasmids. The polypeptide is Tyrosine recombinase XerC (Natranaerobius thermophilus (strain ATCC BAA-1301 / DSM 18059 / JW/NM-WN-LF)).